The primary structure comprises 456 residues: Chromosomal replication initiator protein DnaA (456 aa).

The interval 1–83 (MKLKILHFTS…DAFEEESNNG (83 aa)) is domain I, interacts with DnaA modulators. A domain II region spans residues 83-116 (GVRPEIHIKVKEKKENVKSLKNNKSMLYFNTNGL). A domain III, AAA+ region region spans residues 117–331 (SLNPFYTFEN…GILSTINAHI (215 aa)). ATP is bound by residues Gly-161, Gly-163, Lys-164, and Thr-165. The segment at 332-456 (NLSPESSSLK…SKIQQSLDSV (125 aa)) is domain IV, binds dsDNA.

This sequence belongs to the DnaA family. Oligomerizes as a right-handed, spiral filament on DNA at oriC.

It localises to the cytoplasm. In terms of biological role, plays an essential role in the initiation and regulation of chromosomal replication. ATP-DnaA binds to the origin of replication (oriC) to initiate formation of the DNA replication initiation complex once per cell cycle. Binds the DnaA box (a 9 base pair repeat at the origin) and separates the double-stranded (ds)DNA. Forms a right-handed helical filament on oriC DNA; dsDNA binds to the exterior of the filament while single-stranded (ss)DNA is stabiized in the filament's interior. The ATP-DnaA-oriC complex binds and stabilizes one strand of the AT-rich DNA unwinding element (DUE), permitting loading of DNA polymerase. After initiation quickly degrades to an ADP-DnaA complex that is not apt for DNA replication. Binds acidic phospholipids. The polypeptide is Chromosomal replication initiator protein DnaA (Helicobacter hepaticus (strain ATCC 51449 / 3B1)).